A 152-amino-acid polypeptide reads, in one-letter code: VQ motif-containing protein 8, chloroplastic (152 aa).

A disordered region spans residues 1–42 (MIPTRCNEINGSRPSSLKLAGESHTIKKTSSCKSKPRPHGRA). A chloroplast-targeting transit peptide spans 1–58 (MIPTRCNEINGSRPSSLKLAGESHTIKKTSSCKSKPRPHGRASPVIIYAHSPKVIHTR). The VQ motif lies at 62 to 71 (FMALVQRLTG). Positions 80–108 (TSESSSSVVTEEVNVGDDNTAAPFSQDRT) are disordered. Positions 81–92 (SESSSSVVTEEV) are enriched in low complexity.

Its subcellular location is the plastid. The protein resides in the chloroplast. Its function is as follows. May be involved in chloroplast development. The polypeptide is VQ motif-containing protein 8, chloroplastic (Arabidopsis thaliana (Mouse-ear cress)).